The chain runs to 477 residues: 3-isopropylmalate dehydratase large subunit (477 aa).

[4Fe-4S] cluster contacts are provided by C352, C413, and C416.

This sequence belongs to the aconitase/IPM isomerase family. LeuC type 1 subfamily. As to quaternary structure, heterodimer of LeuC and LeuD. [4Fe-4S] cluster is required as a cofactor.

It carries out the reaction (2R,3S)-3-isopropylmalate = (2S)-2-isopropylmalate. Its pathway is amino-acid biosynthesis; L-leucine biosynthesis; L-leucine from 3-methyl-2-oxobutanoate: step 2/4. Catalyzes the isomerization between 2-isopropylmalate and 3-isopropylmalate, via the formation of 2-isopropylmaleate. The chain is 3-isopropylmalate dehydratase large subunit from Pseudomonas putida (strain ATCC 47054 / DSM 6125 / CFBP 8728 / NCIMB 11950 / KT2440).